We begin with the raw amino-acid sequence, 268 residues long: MIYSDAGIFLNETKASLVYSRLSKHIRNLGLSGFREYCELVASPAGAAARREMLSHLTTNFTRFFRENHHFEHLRDHVLPELLQRARSGGRVRIWSAASSDGQEPYSIALTVLSLMPNVADYDFKILATDIDPKILAIARAGAYDESALETVSPAMRKQWFSEVEVQGRRKFQVDDRVKRLITYNELNLMAQWPFKGKFDVIFCRNVVIYFDEPTQMKIWQRFAGLLPEGGHLYIGHSERVSGEAKHVFDNIGITTYRYTTKGLGRKA.

Positions 1–262 (MIYSDAGIFL…GITTYRYTTK (262 aa)) constitute a CheR-type methyltransferase domain. S-adenosyl-L-methionine-binding positions include Asn60, Thr62, Arg66, Glu104, Asp130, 188–189 (NL), and 205–206 (RN).

The enzyme catalyses L-glutamyl-[protein] + S-adenosyl-L-methionine = [protein]-L-glutamate 5-O-methyl ester + S-adenosyl-L-homocysteine. In terms of biological role, methylation of the membrane-bound methyl-accepting chemotaxis proteins (MCP) to form gamma-glutamyl methyl ester residues in MCP. This Rhizobium etli (strain ATCC 51251 / DSM 11541 / JCM 21823 / NBRC 15573 / CFN 42) protein is Probable chemotaxis protein methyltransferase (cheRch1).